The chain runs to 358 residues: Type II restriction enzyme SacI (358 aa).

It catalyses the reaction Endonucleolytic cleavage of DNA to give specific double-stranded fragments with terminal 5'-phosphates.. Its function is as follows. A subtype P restriction enzyme that recognizes the double-stranded sequence 5'-GAGCTC-3' and cleaves after T-5. In Streptomyces achromogenes, this protein is Type II restriction enzyme SacI.